Consider the following 274-residue polypeptide: Proteasome subunit beta (274 aa).

Positions 1 to 52 are cleaved as a propeptide — removed in mature form; by autocatalysis; that stretch reads MADPLGAAGRLPAVFMTPGTSSFADFLSRSAPHLLPGARSGLPGPVTEVAHG. The Nucleophile role is filled by T53.

It belongs to the peptidase T1B family. As to quaternary structure, the 20S proteasome core is composed of 14 alpha and 14 beta subunits that assemble into four stacked heptameric rings, resulting in a barrel-shaped structure. The two inner rings, each composed of seven catalytic beta subunits, are sandwiched by two outer rings, each composed of seven alpha subunits. The catalytic chamber with the active sites is on the inside of the barrel. Has a gated structure, the ends of the cylinder being occluded by the N-termini of the alpha-subunits. Is capped by the proteasome-associated ATPase, ARC.

It is found in the cytoplasm. It catalyses the reaction Cleavage of peptide bonds with very broad specificity.. It participates in protein degradation; proteasomal Pup-dependent pathway. Its activity is regulated as follows. The formation of the proteasomal ATPase ARC-20S proteasome complex, likely via the docking of the C-termini of ARC into the intersubunit pockets in the alpha-rings, may trigger opening of the gate for substrate entry. Interconversion between the open-gate and close-gate conformations leads to a dynamic regulation of the 20S proteasome proteolysis activity. Component of the proteasome core, a large protease complex with broad specificity involved in protein degradation. This chain is Proteasome subunit beta, found in Frankia casuarinae (strain DSM 45818 / CECT 9043 / HFP020203 / CcI3).